Consider the following 115-residue polypeptide: NAD(P)H-quinone oxidoreductase subunit M (115 aa).

The protein belongs to the complex I NdhM subunit family. As to quaternary structure, NDH-1 can be composed of about 15 different subunits; different subcomplexes with different compositions have been identified which probably have different functions.

It localises to the cellular thylakoid membrane. The enzyme catalyses a plastoquinone + NADH + (n+1) H(+)(in) = a plastoquinol + NAD(+) + n H(+)(out). It carries out the reaction a plastoquinone + NADPH + (n+1) H(+)(in) = a plastoquinol + NADP(+) + n H(+)(out). Functionally, NDH-1 shuttles electrons from an unknown electron donor, via FMN and iron-sulfur (Fe-S) centers, to quinones in the respiratory and/or the photosynthetic chain. The immediate electron acceptor for the enzyme in this species is believed to be plastoquinone. Couples the redox reaction to proton translocation, and thus conserves the redox energy in a proton gradient. Cyanobacterial NDH-1 also plays a role in inorganic carbon-concentration. The sequence is that of NAD(P)H-quinone oxidoreductase subunit M from Prochlorococcus marinus subsp. pastoris (strain CCMP1986 / NIES-2087 / MED4).